Reading from the N-terminus, the 179-residue chain is Ubiquinol-cytochrome c reductase iron-sulfur subunit (179 aa).

Residues 14–35 traverse the membrane as a helical segment; it reads FLYVATAAVGAAGVAAVAWPFI. A Rieske domain is found at 80-173; the sequence is AKEIQSEEAA…YEFVDNTKIR (94 aa). [2Fe-2S] cluster is bound by residues C118, H120, C137, and H140. C123 and C139 form a disulfide bridge.

It belongs to the Rieske iron-sulfur protein family. The main subunits of complex b-c1 are: cytochrome b, cytochrome c1 and the Rieske protein. It depends on [2Fe-2S] cluster as a cofactor.

It is found in the cell membrane. It carries out the reaction a quinol + 2 Fe(III)-[cytochrome c](out) = a quinone + 2 Fe(II)-[cytochrome c](out) + 2 H(+)(out). Functionally, component of the ubiquinol-cytochrome c reductase complex (complex III or cytochrome b-c1 complex), which is a respiratory chain that generates an electrochemical potential coupled to ATP synthesis. The chain is Ubiquinol-cytochrome c reductase iron-sulfur subunit (petA) from Blastochloris viridis (Rhodopseudomonas viridis).